We begin with the raw amino-acid sequence, 118 residues long: NADH-quinone oxidoreductase subunit A (118 aa).

Helical transmembrane passes span 8–28, 64–84, and 87–107; these read IGIFLVAAISFPLIPLVLAFF, ALAFVIFDIEVIFLYPWAVAF, and VGLYGLIAATIFLLMLFAGLL.

Belongs to the complex I subunit 3 family. NDH-1 is composed of 14 different subunits. Subunits NuoA, H, J, K, L, M, N constitute the membrane sector of the complex.

The protein localises to the cell membrane. It catalyses the reaction a quinone + NADH + 5 H(+)(in) = a quinol + NAD(+) + 4 H(+)(out). Its function is as follows. NDH-1 shuttles electrons from NADH, via FMN and iron-sulfur (Fe-S) centers, to quinones in the respiratory chain. The immediate electron acceptor for the enzyme in this species is believed to be ubiquinone. Couples the redox reaction to proton translocation (for every two electrons transferred, four hydrogen ions are translocated across the cytoplasmic membrane), and thus conserves the redox energy in a proton gradient. This chain is NADH-quinone oxidoreductase subunit A, found in Chloroflexus aurantiacus (strain ATCC 29366 / DSM 635 / J-10-fl).